The primary structure comprises 475 residues: Secreted triacylglycerol lipase LIP5 (475 aa).

A signal peptide spans 1–19; it reads MYPCTLLMVLLCLAIMTHG. A disulfide bond links Cys-129 and Cys-300. Ser-213 acts as the Nucleophile in catalysis. 2 N-linked (GlcNAc...) asparagine glycosylation sites follow: Asn-246 and Asn-312. Asp-360 is a catalytic residue. N-linked (GlcNAc...) asparagine glycosylation occurs at Asn-369. His-394 is an active-site residue. Asn-471 is a glycosylation site (N-linked (GlcNAc...) asparagine).

This sequence belongs to the AB hydrolase superfamily. Lipase family. Class Lip subfamily.

It catalyses the reaction a triacylglycerol + H2O = a diacylglycerol + a fatty acid + H(+). The catalysed reaction is a monoacylglycerol + H2O = glycerol + a fatty acid + H(+). The enzyme catalyses a diacylglycerol + H2O = a monoacylglycerol + a fatty acid + H(+). In terms of biological role, secreted lipase involved in Dandruff and seborrheic dermatitis (D/SD) probably via lipase-mediated breakdown of sebaceous lipids and release of irritating free fatty acids. Has triacylglycerol lipase activity and is able to hydrolyze triolein. Mostly converts monoolein to di- and triolein, while free fatty acids are only produced in low amounts. This chain is Secreted triacylglycerol lipase LIP5, found in Malassezia globosa (strain ATCC MYA-4612 / CBS 7966) (Dandruff-associated fungus).